The primary structure comprises 299 residues: Formamidopyrimidine-DNA glycosylase (299 aa).

Pro2 (schiff-base intermediate with DNA) is an active-site residue. Residue Glu3 is the Proton donor of the active site. The Proton donor; for beta-elimination activity role is filled by Lys58. 3 residues coordinate DNA: His106, Arg125, and Lys168. An FPG-type zinc finger spans residues 259–295; that stretch reads RVYDRVGHACPTKGCTGRVGRIVQGGRSTFFCETCQV. The active-site Proton donor; for delta-elimination activity is the Arg285.

This sequence belongs to the FPG family. Monomer. The cofactor is Zn(2+).

It carries out the reaction Hydrolysis of DNA containing ring-opened 7-methylguanine residues, releasing 2,6-diamino-4-hydroxy-5-(N-methyl)formamidopyrimidine.. The catalysed reaction is 2'-deoxyribonucleotide-(2'-deoxyribose 5'-phosphate)-2'-deoxyribonucleotide-DNA = a 3'-end 2'-deoxyribonucleotide-(2,3-dehydro-2,3-deoxyribose 5'-phosphate)-DNA + a 5'-end 5'-phospho-2'-deoxyribonucleoside-DNA + H(+). Involved in base excision repair of DNA damaged by oxidation or by mutagenic agents. Acts as a DNA glycosylase that recognizes and removes damaged bases. Has a preference for oxidized purines, such as 7,8-dihydro-8-oxoguanine (8-oxoG). Has AP (apurinic/apyrimidinic) lyase activity and introduces nicks in the DNA strand. Cleaves the DNA backbone by beta-delta elimination to generate a single-strand break at the site of the removed base with both 3'- and 5'-phosphates. The sequence is that of Formamidopyrimidine-DNA glycosylase from Methylorubrum extorquens (strain CM4 / NCIMB 13688) (Methylobacterium extorquens).